A 622-amino-acid polypeptide reads, in one-letter code: Type 2 DNA topoisomerase 6 subunit B (622 aa).

ATP-binding positions include Asn48, Asp80, Ser101–Arg102, Gly111–Ser118, and Lys435.

Belongs to the TOP6B family. Homodimer. Heterotetramer of two Top6A and two Top6B chains.

It carries out the reaction ATP-dependent breakage, passage and rejoining of double-stranded DNA.. In terms of biological role, relaxes both positive and negative superturns and exhibits a strong decatenase activity. This is Type 2 DNA topoisomerase 6 subunit B from Methanococcoides burtonii (strain DSM 6242 / NBRC 107633 / OCM 468 / ACE-M).